Consider the following 103-residue polypeptide: Pyrimidine/purine nucleoside phosphorylase (103 aa).

Belongs to the nucleoside phosphorylase PpnP family.

It catalyses the reaction a purine D-ribonucleoside + phosphate = a purine nucleobase + alpha-D-ribose 1-phosphate. The catalysed reaction is adenosine + phosphate = alpha-D-ribose 1-phosphate + adenine. The enzyme catalyses cytidine + phosphate = cytosine + alpha-D-ribose 1-phosphate. It carries out the reaction guanosine + phosphate = alpha-D-ribose 1-phosphate + guanine. It catalyses the reaction inosine + phosphate = alpha-D-ribose 1-phosphate + hypoxanthine. The catalysed reaction is thymidine + phosphate = 2-deoxy-alpha-D-ribose 1-phosphate + thymine. The enzyme catalyses uridine + phosphate = alpha-D-ribose 1-phosphate + uracil. It carries out the reaction xanthosine + phosphate = alpha-D-ribose 1-phosphate + xanthine. Its function is as follows. Catalyzes the phosphorolysis of diverse nucleosides, yielding D-ribose 1-phosphate and the respective free bases. Can use uridine, adenosine, guanosine, cytidine, thymidine, inosine and xanthosine as substrates. Also catalyzes the reverse reactions. In Shewanella denitrificans (strain OS217 / ATCC BAA-1090 / DSM 15013), this protein is Pyrimidine/purine nucleoside phosphorylase.